A 299-amino-acid chain; its full sequence is Pyridoxal kinase PdxY (299 aa).

Ser-18 contacts substrate. The ATP site is built by Asp-120 and Glu-157. Asp-235 contributes to the substrate binding site.

Belongs to the pyridoxine kinase family. PdxY subfamily. In terms of assembly, homodimer. Mg(2+) serves as cofactor.

The catalysed reaction is pyridoxal + ATP = pyridoxal 5'-phosphate + ADP + H(+). The protein operates within cofactor metabolism; pyridoxal 5'-phosphate salvage; pyridoxal 5'-phosphate from pyridoxal: step 1/1. Pyridoxal kinase involved in the salvage pathway of pyridoxal 5'-phosphate (PLP). Catalyzes the phosphorylation of pyridoxal to PLP. In Deinococcus geothermalis (strain DSM 11300 / CIP 105573 / AG-3a), this protein is Pyridoxal kinase PdxY.